We begin with the raw amino-acid sequence, 732 residues long: Copper-transporting ATPase (732 aa).

Over 1-88 the chain is Cytoplasmic; that stretch reads MTKAQFYIEG…NPSFLTPNVK (88 aa). Residues 2–68 enclose the HMA domain; sequence TKAQFYIEGM…QIEKLGYQPR (67 aa). The Cu(+) site is built by Cys-13 and Cys-16. The helical transmembrane segment at 89–109 threads the bilayer; it reads LALVLLGTLGVLALSMFAPLL. The Extracellular segment spans residues 110 to 122; that stretch reads PLPSFLKNPFING. Residues 123–142 form a helical membrane-spanning segment; it reads IVQLVLSLMVMHMGRNFYVH. Residues 143 to 149 are Cytoplasmic-facing; sequence GFKALWA. The helical transmembrane segment at 150–170 threads the bilayer; that stretch reads RQPNMDSLIALGTSAALLYSL. The Extracellular portion of the chain corresponds to 171 to 187; the sequence is VLLFRAYTHAPIEGYYF. A helical membrane pass occupies residues 188–208; that stretch reads ESVCVILLFVMAGKRVEENSK. Over 209–336 the chain is Cytoplasmic; it reads DKALEAMQSL…KAPIARLADK (128 aa). Residues 337–359 form a helical membrane-spanning segment; sequence VAGVFVPIVIGIASIAFLVWLVL. Residues 360-365 lie on the Extracellular side of the membrane; the sequence is GDFTRA. Residues 366 to 383 form a helical membrane-spanning segment; the sequence is LEVFIAILVISCPCALGL. Residues 384–663 are Cytoplasmic-facing; sequence ATPMALLVAQ…KLSALTIANI (280 aa). Asp-421 functions as the 4-aspartylphosphate intermediate in the catalytic mechanism. Mg(2+) is bound by residues Asp-609 and Asp-613. A helical membrane pass occupies residues 664–683; the sequence is KQNLFWAFCYNSIAIPLACG. Residues 684–694 are Extracellular-facing; it reads VAYKLGIMFNP. A helical membrane pass occupies residues 695–713; sequence MLASLAMSLSSVSVVLNAQ. The Cytoplasmic segment spans residues 714-732; the sequence is RLRGAHFKIRGSHENRHSS.

This sequence belongs to the cation transport ATPase (P-type) (TC 3.A.3) family. Type IB subfamily.

The protein localises to the cell membrane. The catalysed reaction is Cu(+)(in) + ATP + H2O = Cu(+)(out) + ADP + phosphate + H(+). Probably involved in copper export. This Helicobacter felis (strain ATCC 49179 / CCUG 28539 / NCTC 12436 / CS1) protein is Copper-transporting ATPase (copA).